Reading from the N-terminus, the 437-residue chain is Sodium/bile acid cotransporter 4 (437 aa).

Residues 1-103 (MDGNDNVTLL…LPFWDTPLNH (103 aa)) lie on the Extracellular side of the membrane. N-linked (GlcNAc...) asparagine glycosylation is found at N6, N18, and N24. The tract at residues 37–82 (APASSAGPGPGLSLGPGPSFGFSPGPTPTPEPTTSGLAGGAASHGP) is disordered. The segment covering 51-60 (GPGPSFGFSP) has biased composition (low complexity). The chain crosses the membrane as a helical span at residues 104–124 (GLNVFVGAALCITMLGLGCTV). Over 125-140 (DVNHFGAHVRRPVGAL) the chain is Cytoplasmic. A helical transmembrane segment spans residues 141–161 (LAALCQFGLLPLLAFLLALAF). Residues 162–197 (KLDEVAAVAVLLCGCCPGGNLSNLMSLLVDGDMNLS) lie on the Extracellular side of the membrane. 2 N-linked (GlcNAc...) asparagine glycosylation sites follow: N181 and N195. The chain crosses the membrane as a helical span at residues 198 to 218 (IIMTISSTLLALVLMPLCLWI). Residues 219–233 (YSWAWINTPIVQLLP) lie on the Cytoplasmic side of the membrane. A helical transmembrane segment spans residues 234-254 (LGTVTLTLCSTLIPIGLGVFI). Over 255-267 (RYKYSRVADYIVK) the chain is Extracellular. Residues 268-288 (VSLWSLLVTLVVLFIMTGTML) traverse the membrane as a helical segment. Residues 289–291 (GPE) are Cytoplasmic-facing. The chain crosses the membrane as a helical span at residues 292 to 312 (LLASIPAAVYVIAIFMPLAGY). Over 313–360 (ASGYGLATLFHLPPNCKRTVCLETGSQNVQLCTAILKLAFPPQFIGSM) the chain is Extracellular. The helical transmembrane segment at 361–381 (YMFPLLYALFQSAEAGIFVLI) threads the bilayer. The Cytoplasmic segment spans residues 382–437 (YKMYGSEMLHKRDPLDEDEDTDISYKKLKEEEMADTSYGTVKAENIIMMETAQTSL).

The protein belongs to the bile acid:sodium symporter (BASS) (TC 2.A.28) family. Activated following N-terminal proteolytic cleavage by thrombin and/or proteases. As to expression, highly expressed in brain and small intestine, and moderately expressed in colon, heart, prostate, and testis. Very low levels were detected in kidney, liver, ovary, placenta, spleen, and thymus.

It localises to the cell membrane. In terms of biological role, transporter for bile acids. The polypeptide is Sodium/bile acid cotransporter 4 (SLC10A4) (Homo sapiens (Human)).